The following is a 177-amino-acid chain: Large ribosomal subunit protein uL6 (177 aa).

This sequence belongs to the universal ribosomal protein uL6 family. Part of the 50S ribosomal subunit.

This protein binds to the 23S rRNA, and is important in its secondary structure. It is located near the subunit interface in the base of the L7/L12 stalk, and near the tRNA binding site of the peptidyltransferase center. The sequence is that of Large ribosomal subunit protein uL6 from Magnetococcus marinus (strain ATCC BAA-1437 / JCM 17883 / MC-1).